A 344-amino-acid polypeptide reads, in one-letter code: [LysW]-L-2-aminoadipate 6-phosphate reductase (344 aa).

NADP(+) is bound by residues 12–15 (SGYA), 36–38 (SRR), and L75. C148 is a catalytic residue. Residues S180, A184, and N312 each contribute to the NADP(+) site.

The protein belongs to the NAGSA dehydrogenase family. Type 1 subfamily. LysY sub-subfamily. Homotetramer. Interacts with LysW. May form a ternary complex with LysW and LysZ.

Its subcellular location is the cytoplasm. The enzyme catalyses [amino-group carrier protein]-C-terminal-N-(1-carboxy-5-oxopentan-1-yl)-L-glutamine + phosphate + NADP(+) = [amino-group carrier protein]-C-terminal-N-(1-carboxy-5-phosphooxy-5-oxopentan-1-yl)-L-glutamine + NADPH + H(+). The protein operates within amino-acid biosynthesis; L-lysine biosynthesis via AAA pathway; L-lysine from L-alpha-aminoadipate (Thermus route): step 3/5. In terms of biological role, catalyzes the NADPH-dependent reduction of [LysW]-aminoadipate 6-phosphate to yield [LysW]-aminoadipate 6-semialdehyde. This is [LysW]-L-2-aminoadipate 6-phosphate reductase from Thermus thermophilus (strain ATCC BAA-163 / DSM 7039 / HB27).